The chain runs to 488 residues: Sterol 14-demethylase (488 aa).

A helical transmembrane segment spans residues 12–32 (TGLVIVATLVIAKLIFSFFTS). Heme is bound at residue cysteine 433.

This sequence belongs to the cytochrome P450 family. It depends on heme as a cofactor. In terms of tissue distribution, expressed in leaves, roots, stems, siliques, flowers, flower buds and seedlings.

The protein resides in the membrane. The enzyme catalyses a 14alpha-methyl steroid + 3 reduced [NADPH--hemoprotein reductase] + 3 O2 = a Delta(14) steroid + formate + 3 oxidized [NADPH--hemoprotein reductase] + 4 H2O + 4 H(+). Its function is as follows. Involved in sterol biosynthesis. Catalyzes the 14-alpha demethylation of obtusifoliol to 4 alpha-methyl-5 alpha-ergosta-8,14,24(28)-trien-3 beta-ol. This is Sterol 14-demethylase (CYP51G1) from Arabidopsis thaliana (Mouse-ear cress).